We begin with the raw amino-acid sequence, 132 residues long: Phosphoribosyl-AMP cyclohydrolase (132 aa).

Residue Asp85 participates in Mg(2+) binding. Residue Cys86 coordinates Zn(2+). Mg(2+) contacts are provided by Asp87 and Asp89. Residues Cys102 and Cys109 each coordinate Zn(2+).

Belongs to the PRA-CH family. As to quaternary structure, homodimer. Requires Mg(2+) as cofactor. Zn(2+) serves as cofactor.

It localises to the cytoplasm. The catalysed reaction is 1-(5-phospho-beta-D-ribosyl)-5'-AMP + H2O = 1-(5-phospho-beta-D-ribosyl)-5-[(5-phospho-beta-D-ribosylamino)methylideneamino]imidazole-4-carboxamide. Its pathway is amino-acid biosynthesis; L-histidine biosynthesis; L-histidine from 5-phospho-alpha-D-ribose 1-diphosphate: step 3/9. Catalyzes the hydrolysis of the adenine ring of phosphoribosyl-AMP. In Frankia alni (strain DSM 45986 / CECT 9034 / ACN14a), this protein is Phosphoribosyl-AMP cyclohydrolase.